The chain runs to 424 residues: MGFNIPRGTQDILPGESERWQYVEKIARETCHAYQYKEIRTPIFEHTELFSRGVGESTDIVQKEMYTFADKKGRSLTLRPEGTASAVRSFVENKLFANPVQPTKLYYIGPMFRYERPQTGRYRQFYQFGIEAIGSNDPAIDAEVIALAMSVYRKAGLSNLKLVINSLGDKESRTAHREALIRHFEPRIDEFCSDCQKRLRQNPLRILDCKKDRDHELLKTAPSILDYLNEESKAYFAKVQQYLTDIGIAFEVDPNLVRGLDYYNHTAFEIMSNAEGFGAITTLAGGGRYDGLTEEFGGPKAPGIGFAMSIERLLAALDAENVKVGADEGIDCYIVTLGDKAKDYSVSLLYKLREAGISAEIDYEQKKMKGQFKSADRLNAKYIAVLGEDELNQNQINVKDGKTGDQQAIGLDDFIRFLKTNTES.

This sequence belongs to the class-II aminoacyl-tRNA synthetase family. Homodimer.

It is found in the cytoplasm. The catalysed reaction is tRNA(His) + L-histidine + ATP = L-histidyl-tRNA(His) + AMP + diphosphate + H(+). The polypeptide is Histidine--tRNA ligase (Bacillus licheniformis (strain ATCC 14580 / DSM 13 / JCM 2505 / CCUG 7422 / NBRC 12200 / NCIMB 9375 / NCTC 10341 / NRRL NRS-1264 / Gibson 46)).